A 541-amino-acid chain; its full sequence is Cytosolic phospholipase A2 gamma (541 aa).

The PLA2c domain maps to 1-541; the sequence is MGSSEVSIIP…KDSARSCCLA (541 aa). The active-site Nucleophile is the Ser82. The interval 260–292 is required for lipid droplet localization; it reads LTLKGLWRRAVANAKSIGHLIFARLLRLQESSQ. Ser337 carries the phosphoserine modification. Asp385 (proton acceptor) is an active-site residue. At Cys538 the chain carries Cysteine methyl ester. The S-farnesyl cysteine moiety is linked to residue Cys538. Residues 539–541 constitute a propeptide, removed in mature form; that stretch reads CLA.

In terms of assembly, (Microbial infection) Interacts with HCV non-structural protein 4B/NS4B; this interaction likely initiates the recruitment of replication complexes to lipid droplets. Highly expressed in heart and skeletal muscle.

The protein localises to the cell membrane. The protein resides in the endoplasmic reticulum membrane. It is found in the mitochondrion membrane. Its subcellular location is the lipid droplet. It catalyses the reaction a 1,2-diacyl-sn-glycero-3-phosphocholine + H2O = a 1-acyl-sn-glycero-3-phosphocholine + a fatty acid + H(+). The catalysed reaction is a 1-O-alkyl-2-acyl-sn-glycero-3-phosphocholine + H2O = a 1-O-alkyl-sn-glycero-3-phosphocholine + a fatty acid + H(+). The enzyme catalyses 1,2-dihexadecanoyl-sn-glycero-3-phosphocholine + H2O = 1-hexadecanoyl-sn-glycero-3-phosphocholine + hexadecanoate + H(+). It carries out the reaction 1-hexadecanoyl-2-(9Z-octadecenoyl)-sn-glycero-3-phosphocholine + H2O = 1-hexadecanoyl-sn-glycero-3-phosphocholine + (9Z)-octadecenoate + H(+). It catalyses the reaction 1-hexadecanoyl-2-(9Z,12Z-octadecadienoyl)-sn-glycero-3-phosphocholine + H2O = (9Z,12Z)-octadecadienoate + 1-hexadecanoyl-sn-glycero-3-phosphocholine + H(+). The catalysed reaction is 1-hexadecanoyl-2-(5Z,8Z,11Z,14Z-eicosatetraenoyl)-sn-glycero-3-phosphocholine + H2O = 1-hexadecanoyl-sn-glycero-3-phosphocholine + (5Z,8Z,11Z,14Z)-eicosatetraenoate + H(+). The enzyme catalyses 1-O-hexadecyl-2-(5Z,8Z,11Z,14Z)-eicosatetraenoyl-sn-glycero-3-phosphocholine + H2O = 1-O-hexadecyl-sn-glycero-3-phosphocholine + (5Z,8Z,11Z,14Z)-eicosatetraenoate + H(+). It carries out the reaction 1-hexadecanoyl-2-(5Z,8Z,11Z,14Z-eicosatetraenoyl)-sn-glycero-3-phosphocholine + H2O = 2-(5Z,8Z,11Z,14Z)-eicosatetraenoyl-sn-glycero-3-phosphocholine + hexadecanoate + H(+). It catalyses the reaction a 1-acyl-sn-glycero-3-phosphocholine + H2O = sn-glycerol 3-phosphocholine + a fatty acid + H(+). The catalysed reaction is 1-hexadecanoyl-sn-glycero-3-phosphocholine + H2O = sn-glycerol 3-phosphocholine + hexadecanoate + H(+). The enzyme catalyses 2 1-hexadecanoyl-sn-glycero-3-phosphocholine = 1,2-dihexadecanoyl-sn-glycero-3-phosphocholine + sn-glycerol 3-phosphocholine. It carries out the reaction 1-hexadecanoyl-sn-glycero-3-phosphoethanolamine + 1-hexadecanoyl-sn-glycero-3-phosphocholine = 1,2-dihexadecanoyl-sn-glycero-3-phosphoethanolamine + sn-glycerol 3-phosphocholine. It catalyses the reaction 1-hexadecanoyl-sn-glycero-3-phosphoethanolamine + 1-hexadecanoyl-sn-glycero-3-phosphocholine = sn-glycero-3-phosphoethanolamine + 1,2-dihexadecanoyl-sn-glycero-3-phosphocholine. The catalysed reaction is 2 1-hexadecanoyl-sn-glycero-3-phosphoethanolamine = 1,2-dihexadecanoyl-sn-glycero-3-phosphoethanolamine + sn-glycero-3-phosphoethanolamine. The enzyme catalyses 1-O-hexadecyl-sn-glycero-3-phosphocholine + 1-hexadecanoyl-sn-glycero-3-phosphocholine = 1-O-hexadecyl-2-hexadecanoyl-sn-glycero-3-phosphocholine + sn-glycerol 3-phosphocholine. It carries out the reaction a 1-O-(1Z-alkenyl)-sn-glycero-3-phosphoethanolamine + 1-hexadecanoyl-sn-glycero-3-phosphocholine = 1-O-(1Z)-alkenyl-2-hexadecanoyl-sn-glycero-3-phosphoethanolamine + sn-glycerol 3-phosphocholine. It catalyses the reaction 1-O-hexadecyl-sn-glycero-3-phosphocholine + 1-hexadecanoyl-sn-glycero-3-phosphoethanolamine = 1-O-hexadecyl-2-hexadecanoyl-sn-glycero-3-phosphocholine + sn-glycero-3-phosphoethanolamine. The catalysed reaction is 1-octadecanoyl-2-(5Z,8Z,11Z,14Z)-eicosatetraenoyl-sn-glycero-3-phosphoethanolamine + 1-hexadecanoyl-sn-glycero-3-phosphocholine = 1-octadecanoyl-sn-glycero-3-phosphoethanolamine + 1-hexadecanoyl-2-(5Z,8Z,11Z,14Z-eicosatetraenoyl)-sn-glycero-3-phosphocholine. The enzyme catalyses 1-octadecanoyl-2-(5Z,8Z,11Z,14Z)-eicosatetraenoyl-sn-glycero-3-phosphoethanolamine + 1-O-hexadecyl-sn-glycero-3-phosphocholine = 1-octadecanoyl-sn-glycero-3-phosphoethanolamine + 1-O-hexadecyl-2-(5Z,8Z,11Z,14Z)-eicosatetraenoyl-sn-glycero-3-phosphocholine. It carries out the reaction 1-hexadecanoyl-2-(9Z,12Z-octadecadienoyl)-sn-glycero-3-phosphocholine + a 1-O-(1Z-alkenyl)-sn-glycero-3-phosphoethanolamine = 1-O-(1Z-alkenyl)-2-(9Z,12Z-octadecadienoyl)-sn-glycero-3-phosphoethanolamine + 1-hexadecanoyl-sn-glycero-3-phosphocholine. It catalyses the reaction 1-hexadecanoyl-2-(5Z,8Z,11Z,14Z-eicosatetraenoyl)-sn-glycero-3-phosphocholine + a 1-O-(1Z-alkenyl)-sn-glycero-3-phosphoethanolamine = 1-O-(1Z)-alkenyl-2-(5Z,8Z,11Z,14Z)-eicosatetraenoyl-sn-glycero-3-phosphoethanolamine + 1-hexadecanoyl-sn-glycero-3-phosphocholine. With respect to regulation, not regulated by calcium, coenzyme A or ATP. Lysophospholipase activity is inhibited by palmitoyl-CoA. Lysophospholipase and O-acyltransferase activities are inhibited by methylarachidonoylfluorophosphonate. Lysophospholipase activity is inhibited by phosphatidate or lysophosphatidate. O-acyltransferase activity is up-regulated at low concentration (10-20 uM) of phosphatidate or lysophosphatidate, but inhibited at higher concentrations. In terms of biological role, calcium-independent phospholipase, lysophospholipase and O-acyltransferase involved in phospholipid remodeling with implications in endoplasmic reticulum membrane homeostasis and lipid droplet biogenesis. Preferentially hydrolyzes the ester bond of the fatty acyl group attached at the sn-2 position of phospholipids with choline and ethanolamine head groups, producing lysophospholipids that are used in deacylation-reacylation cycles. Transfers the sn-1 fatty acyl from one lysophospholipid molecule to the sn-2 position of another lysophospholipid to form diacyl, alkylacyl and alkenylacyl glycerophospholipids. Cleaves ester bonds but not alkyl or alkenyl ether bonds at sn-1 position of lysophospholipids. Catalyzes sn-2 fatty acyl transfer from phospholipids to the sn-2 position of 1-O-alkyl or 1-O-alkenyl lysophospholipids with lower efficiency. In response to dietary fatty acids, may play a role in the formation of nascent lipid droplets from the endoplasmic reticulum likely by regulating the phospholipid composition of these organelles. Functionally, (Microbial infection) May play a role in replication and assembly of human hepatitis C virus (HCV). In response to HCV infection, promotes remodeling of host endoplasmic reticulum membranes to form organelle-like structures called membranous web, where HCV replication occur. Can further mediate translocation of replication complexes to lipid droplets to enable virion assembly. (Microbial infection) May facilitate human T-lymphotropic virus type 1 (HTLV-1) infection by promoting leukotriene B4 (LTB4) biosynthesis. LTB4 acts as a chemoattractant for HTLV-1-infected CD4-positive T cells and favors cell to cell viral transmission. The sequence is that of Cytosolic phospholipase A2 gamma (PLA2G4C) from Homo sapiens (Human).